A 99-amino-acid chain; its full sequence is MDATTNFFISYFLPLISFLGLLNLLYTLYSRSRMDRLRFISSSVVSIFTILFGTMPYARYNRLLGESFCNLMVFVLPVSFFLVSLLLWLLRNKYVSELK.

3 consecutive transmembrane segments (helical) span residues 7 to 29, 39 to 61, and 68 to 90; these read FFIS…YTLY, FISS…ARYN, and FCNL…LWLL.

It localises to the cell membrane. This is an uncharacterized protein from Archaeoglobus fulgidus (strain ATCC 49558 / DSM 4304 / JCM 9628 / NBRC 100126 / VC-16).